The following is a 202-amino-acid chain: Imidazole glycerol phosphate synthase subunit HisH 2 (202 aa).

In terms of domain architecture, Glutamine amidotransferase type-1 spans 1–202 (MIVVIDYGVG…QLFKNFVELV (202 aa)). Residue Cys80 is the Nucleophile of the active site. Active-site residues include His183 and Glu185.

Heterodimer of HisH and HisF.

The protein resides in the cytoplasm. It carries out the reaction 5-[(5-phospho-1-deoxy-D-ribulos-1-ylimino)methylamino]-1-(5-phospho-beta-D-ribosyl)imidazole-4-carboxamide + L-glutamine = D-erythro-1-(imidazol-4-yl)glycerol 3-phosphate + 5-amino-1-(5-phospho-beta-D-ribosyl)imidazole-4-carboxamide + L-glutamate + H(+). The catalysed reaction is L-glutamine + H2O = L-glutamate + NH4(+). Its pathway is amino-acid biosynthesis; L-histidine biosynthesis; L-histidine from 5-phospho-alpha-D-ribose 1-diphosphate: step 5/9. Functionally, IGPS catalyzes the conversion of PRFAR and glutamine to IGP, AICAR and glutamate. The HisH subunit catalyzes the hydrolysis of glutamine to glutamate and ammonia as part of the synthesis of IGP and AICAR. The resulting ammonia molecule is channeled to the active site of HisF. The chain is Imidazole glycerol phosphate synthase subunit HisH 2 (hisH2) from Pseudomonas aeruginosa (strain ATCC 15692 / DSM 22644 / CIP 104116 / JCM 14847 / LMG 12228 / 1C / PRS 101 / PAO1).